Consider the following 57-residue polypeptide: UPF0391 membrane protein AZOSEA39630 (57 aa).

A run of 2 helical transmembrane segments spans residues 4 to 24 and 37 to 57; these read WAII…TGVA and IALA…VLVF.

The protein belongs to the UPF0391 family.

The protein localises to the cell membrane. The protein is UPF0391 membrane protein AZOSEA39630 of Aromatoleum aromaticum (strain DSM 19018 / LMG 30748 / EbN1) (Azoarcus sp. (strain EbN1)).